A 188-amino-acid chain; its full sequence is MFSCCFPTSRGCCFRNGGSESLFRRCRRRLIPHPRRLSPVVIRRIQVPQDSLGQALAGQATPEIPLGLQLHTVLVQEIQELIEAQTLAPGPCAEVRALPAPAAEPEPAWEEAPPERALELEGAPAKDQTNEELPEITEVPESIKRRLGRRVPAATPAPRGNLLLQAWMRVHSWASRLFAPNVLPGTGP.

Expressed in fetal heart, kidney, liver, lung and spleen.

The sequence is that of CMT1A duplicated region transcript 15 protein (CDRT15) from Homo sapiens (Human).